Reading from the N-terminus, the 1034-residue chain is Isoleucine--tRNA ligase (1034 aa).

Positions 48–58 (PTANGKPHIGH) match the 'HIGH' region motif. The 'KMSKS' region signature appears at 588-592 (KMSKH). Residue Lys591 coordinates ATP.

The protein belongs to the class-I aminoacyl-tRNA synthetase family. IleS type 2 subfamily. As to quaternary structure, monomer. It depends on Zn(2+) as a cofactor.

It is found in the cytoplasm. The enzyme catalyses tRNA(Ile) + L-isoleucine + ATP = L-isoleucyl-tRNA(Ile) + AMP + diphosphate. In terms of biological role, catalyzes the attachment of isoleucine to tRNA(Ile). As IleRS can inadvertently accommodate and process structurally similar amino acids such as valine, to avoid such errors it has two additional distinct tRNA(Ile)-dependent editing activities. One activity is designated as 'pretransfer' editing and involves the hydrolysis of activated Val-AMP. The other activity is designated 'posttransfer' editing and involves deacylation of mischarged Val-tRNA(Ile). The polypeptide is Isoleucine--tRNA ligase (Clostridium kluyveri (strain ATCC 8527 / DSM 555 / NBRC 12016 / NCIMB 10680 / K1)).